Reading from the N-terminus, the 268-residue chain is Protein APE_1980.1 (268 aa).

This sequence belongs to the CinA family.

This is Protein APE_1980.1 from Aeropyrum pernix (strain ATCC 700893 / DSM 11879 / JCM 9820 / NBRC 100138 / K1).